Reading from the N-terminus, the 267-residue chain is Tryptophan synthase alpha chain (267 aa).

Residues Glu51 and Asp62 each act as proton acceptor in the active site.

The protein belongs to the TrpA family. Tetramer of two alpha and two beta chains.

The enzyme catalyses (1S,2R)-1-C-(indol-3-yl)glycerol 3-phosphate + L-serine = D-glyceraldehyde 3-phosphate + L-tryptophan + H2O. It functions in the pathway amino-acid biosynthesis; L-tryptophan biosynthesis; L-tryptophan from chorismate: step 5/5. Functionally, the alpha subunit is responsible for the aldol cleavage of indoleglycerol phosphate to indole and glyceraldehyde 3-phosphate. The chain is Tryptophan synthase alpha chain from Prochlorococcus marinus (strain SARG / CCMP1375 / SS120).